Consider the following 576-residue polypeptide: MPKTASRRREITQLLGKVDINFEDDIHMSIANDLFEAYGIPKLDSAEECINTAFPSLDQGVDTFRVEYLRAEILSKFDGHPLGIDTEAAAWEKFLAAEEGCRQTNERLSLVKYHDNSILSWGERVIHTARRKILKLIGESVPFGDVALRCRFSGGATTSVNRLHGHPSWKHACPQDVTKRAFKYLQAFKRACGDVVDLRVNEVRTSNKAVTVPKNSKTDRCIAIEPGWNMFFQLGVGAVLRDRLRLWKIDLNDQSTNQRLARDGSLLNHLATIDLSAASDSISLKLVELLMPPEWYDLLTDLRSDEGILPDGRVVTYEKISSMGNGYTFELESLIFAAIARSVCELLEIDQSTVSVYGDDIIIDTRAAAPLMDVFEYVGFTPNRKKTFCDGPFRESCGKHWFQGVDVTPFYIRRPIRCLADMILVLNSIYRWGTVDGIWDPRALTVYEKYLKLLPRNWRRNRIPDGYGDGALVGLATTNPFVIVKNYSRLYPVLVEVQRDVKRSEEGSYLYALLRDRETRYSPFLRDADRTGFDEAPLATSLRRKTGRYKVAWIQDSAFIRPPYLITGIPEVKLAS.

One can recognise a RdRp catalytic domain in the interval 259–391 (RLARDGSLLN…PNRKKTFCDG (133 aa)). The Mg(2+) site is built by Asp-274, Asp-359, and Asp-360.

As to quaternary structure, homodimer; the replicase complex can dimerize. Part of the viral RNA-dependent RNA polymerase complex, the other subunits are the host ribosomal protein S1, EF-Tu and EF-Ts. S1 is needed for the initiation of genomic RNA (+)-strand replication. Requires Mg(2+) as cofactor.

It catalyses the reaction RNA(n) + a ribonucleoside 5'-triphosphate = RNA(n+1) + diphosphate. Functionally, this is the catalytic subunit of the viral RNA-dependent RNA polymerase complex. This complex is involved in viral RNA replication that produces (+)-stranded genomes via a complementary, (-)-stranded intermediate. Binds RNA cooperatively with the host ribosomal protein S1. This Enterobacteria phage SP (Bacteriophage SP) protein is RNA-directed RNA polymerase subunit beta.